A 225-amino-acid polypeptide reads, in one-letter code: PKHD-type hydroxylase YbiX (225 aa).

A Fe2OG dioxygenase domain is found at 78–177; that stretch reads TLSTPLFNRY…RVASFMWIQS (100 aa). Fe cation is bound by residues His-96, Asp-98, and His-158. 2-oxoglutarate is bound at residue Arg-168.

The cofactor is Fe(2+). Requires L-ascorbate as cofactor.

This is PKHD-type hydroxylase YbiX from Escherichia coli O6:H1 (strain CFT073 / ATCC 700928 / UPEC).